Reading from the N-terminus, the 250-residue chain is uncharacterized protein (250 aa).

The next 7 membrane-spanning stretches (helical) occupy residues 36–56 (VALG…VPAV), 73–93 (PLYM…GFAM), 101–121 (AGAL…SVML), 128–148 (VAAT…FGYT), 156–176 (FGSF…VSIF), 180–200 (PALL…LIAY), and 225–245 (FGAL…LSFF).

This sequence belongs to the BI1 family.

The protein localises to the cell membrane. This is an uncharacterized protein from Caulobacter vibrioides (strain ATCC 19089 / CIP 103742 / CB 15) (Caulobacter crescentus).